A 957-amino-acid chain; its full sequence is SLIT and NTRK-like protein 5 (957 aa).

An N-terminal signal peptide occupies residues 1-40; the sequence is MHVCCPPVTLEQDLHRKMHSWMLQTLAFAVTSLVLSCAET. The Extracellular portion of the chain corresponds to 41–664; sequence IDYYGEICDN…GTGASSVPLS (624 aa). LRR repeat units follow at residues 82–103, 106–127, 130–151, 154–175, 178–199, and 201–222; these read PIYH…EFVN, GASI…AFHG, GLRR…TFLG, NLEY…AFGK, MLQV…LFRF, and PLTH…GLLQ. Asparagine 103 carries N-linked (GlcNAc...) asparagine glycosylation. The 52-residue stretch at 235-286 folds into the LRRCT 1 domain; sequence NPWNCSCELISLKDWLDSISYSALVGDVVCETPFRLHGRDLDEVSKQELCPR. Residues 317-358 form a disordered region; the sequence is ATSSSAVYKPPLKPPKGTRQPNKPRVRPTSRQPSKDLGYSNY. An LRRNT domain is found at 365-407; the sequence is QTKSPVPLECPTACTCNLQISDLGLNVNCQERKIESIAELQPK. LRR repeat units follow at residues 410-431, 434-455, 458-479, 482-503, 506-527, and 529-550; these read NPKK…DFLE, GLDL…AFGD, NLRR…LFYG, SLQY…TFDP, NLQL…VFSG, and TLLR…GVLD. The LRRCT 2 domain occupies 563–614; the sequence is NPWDCTCDVVGMKLWIEQLKVGVLVDEVICKAPKKFAETYMRSIKSELLCPD. Residues 623-632 are compositionally biased toward low complexity; the sequence is PTPSSIQVPS. A disordered region spans residues 623-642; it reads PTPSSIQVPSRTNAATPAVR. The N-linked (GlcNAc...) asparagine glycan is linked to asparagine 644. A helical membrane pass occupies residues 665-685; that stretch reads VLILSLLLVFIMSVFVAAGLF. At 686–957 the chain is on the cytoplasmic side; sequence VLVMKRRKKN…LEKQTTFSQF (272 aa). The disordered stretch occupies residues 789–844; it reads SNHHLQQQPPPPPQQPQQQPPPQMQMQPGEEERRESHHLRSPAYSVSTIEPREDLL. A compositionally biased stretch (pro residues) spans 796-811; sequence QPPPPPQQPQQQPPPQ.

Belongs to the SLITRK family. In the adult, significant expression is detected only in the brain. In the embryo, expressed in the subventricular zone, cortical plate, pyramidal layer of hippocampus, thalamus and hypothalamus.

Its subcellular location is the membrane. In terms of biological role, suppresses neurite outgrowth. This chain is SLIT and NTRK-like protein 5 (Slitrk5), found in Mus musculus (Mouse).